A 440-amino-acid polypeptide reads, in one-letter code: FAD-dependent monooxygenase afoD (440 aa).

Residues Pro-10 to Leu-30 traverse the membrane as a helical segment. FAD is bound by residues Glu-41, Leu-145, and Asp-320. Residue Asn-352 is glycosylated (N-linked (GlcNAc...) asparagine).

It belongs to the paxM FAD-dependent monooxygenase family. The cofactor is FAD.

It localises to the membrane. FAD-dependent monooxygenase; part of the gene cluster that mediates the biosynthesis of asperfuranone, a probable antitumor agent. The polyketide synthase afoG is responsible for producing the 3,5-dimethyloctadienone moiety from acetyl-CoA, three malonyl-CoA, and two S-adenosyl methionines (SAM). The 3,5-dimethyloctadienone moiety is then loaded onto the SAT domain of afoE and extended with four malonyl-CoA and one SAM, which leads to the formation of 2,4-dihydroxy-6-(5,7-dimethyl-2-oxo-trans-3-trans-5-nonadienyl)-3-methylbenzaldehyde (compound 2) after reductive release and aldol condensation. AfoD is the next enzyme in the biosynthesis sequence and hydroxylates the side chain at the benzylic position of compound 2. After benzylic hydroxylation, a furan ring is formed after five-member ring hemiacetal formation and water elimination. AfoF and afoC are proposed to oxidize the R-diketone proton and to reduce the unconjugated carbonyl group, respectively, to generate asperfuranone. Since no intermediates could be isolated from afoF and afoC deletants, the sequence of these two enzymes is not fully understood. Moreover, since afoC deletant still produces a small amount of asperfuranone, other endogenous oxidoreductases might catalyze the same reaction with much less efficiency. The polypeptide is FAD-dependent monooxygenase afoD (Emericella nidulans (strain FGSC A4 / ATCC 38163 / CBS 112.46 / NRRL 194 / M139) (Aspergillus nidulans)).